We begin with the raw amino-acid sequence, 326 residues long: Methyltransferase phqN (326 aa).

This sequence belongs to the class I-like SAM-binding methyltransferase superfamily. Erg6/SMT family.

Its pathway is alkaloid biosynthesis. Methyltransferase; part of the gene cluster that mediates the biosynthesis of paraherquamide, a fungal indole alkaloid that belongs to a family of natural products containing a characteristic bicyclo[2.2.2]diazaoctane core. The first steps in the biosynthesis of paraherquamide is the production of the beta-methyl-proline precursor from L-isoleucine. They require oxidation of a terminally hydroxylated L-isoleucine to the corresponding aldehyde by enzymes which have still to be identified. Spontaneous cyclization and dehydration would yield the 4-methyl pyrolline-5-carboxylic acid, which is then reduced by the pyrroline-5-carboxylate reductase phqD leading to the beta-methyl-proline precursor. The next step of paraherquamide biosynthesis involves coupling of beta-methyl-proline and L-tryptophan by the bimodular NRPS phqB, to produce a monooxopiperazine intermediate. The reductase (R) domain of phqB utilizes NADPH for hydride transfer to reduce the thioester bond of the T domain-tethered linear dipeptide to a hemithioaminal intermediate, which spontaneously cleaves the C-S bond to release the aldehyde product. This compound undergoes spontaneous cyclization and dehydration to give a dienamine which is reverse prenylated at C-2 by the reverse prenyltransferase phqJ. The other prenyltransferase present in the cluster, phqI may be a redundant gene in the pathway. During biosynthetic assembly, the key step to produce the polycyclic core is catalyzed by the bifunctional reductase and intramolecular [4+2] Diels-Alderase, phqE, resulting in formation of the [2.2.2] diazaoctane intermediate preparaherquamide. Following formation of preparaherquamide, an indole 2,3-epoxidation-initiated pinacol-like rearrangement is catalyzed by the phqK FAD-dependent monooxygenase. The prenyltransferase phqA, the cytochrome P450 monooxygenase phqL, and the FAD-linked oxidoreductase phqH (or the cytochrome P450 monooxygenase phqM), are proposed to be involved in the formation of the pyran ring. The FAD-dependent monooxygenase phqK is likely responsible for generation of the spiro-oxindole, and the N-methylation is likely mediated by the phqN methyltransferase leading to the isolable natural product paraherquamide F. However, the order of these biosynthetic steps has still to be determined. In late-stage paraherquamide biosynthesis, the third P450 monooxygenase, phqO, is probably responsible for the C-14 hydroxylation, transforming paraherquamide F to paraherquamide G, and paraherquamide E to the final product paraherquamide A. The expansion from the 6-membered ring pyran (in paraherquamides F and G) to the 7-membered dioxepin ring (in paraherquamides A and E) represents a poorly understood but intriguing process that probably involves the 2-oxoglutarate-dependent dioxygenase phqC. Finally, the remaining members of the paraherquamide cluster, including phqI as well as phqM (or phqH), do not have a clearly prescribed role and appear to be redundant. This chain is Methyltransferase phqN, found in Penicillium fellutanum.